Consider the following 165-residue polypeptide: Protein-export protein SecB (165 aa).

This sequence belongs to the SecB family. Homotetramer, a dimer of dimers. One homotetramer interacts with 1 SecA dimer.

Its subcellular location is the cytoplasm. Its function is as follows. One of the proteins required for the normal export of preproteins out of the cell cytoplasm. It is a molecular chaperone that binds to a subset of precursor proteins, maintaining them in a translocation-competent state. It also specifically binds to its receptor SecA. The protein is Protein-export protein SecB of Ruegeria pomeroyi (strain ATCC 700808 / DSM 15171 / DSS-3) (Silicibacter pomeroyi).